The following is a 119-amino-acid chain: MTRIRRGYIARRRRTKIRLFASTFRGAHSRLTRTIIQQKMRALASSHRDRGRQKRNFRRLWITRINAAIREIGVSYSYSRSIKDLYKSQLLLNRKILAQIAISNTNCLYMISKEIIKFK.

Belongs to the bacterial ribosomal protein bL20 family.

It is found in the plastid. The protein resides in the chloroplast. Functionally, binds directly to 23S ribosomal RNA and is necessary for the in vitro assembly process of the 50S ribosomal subunit. It is not involved in the protein synthesizing functions of that subunit. The chain is Large ribosomal subunit protein bL20c from Nandina domestica (Heavenly bamboo).